A 2209-amino-acid polypeptide reads, in one-letter code: Orsellinic acid synthase armB (2209 aa).

The tract at residues 38–261 (LLLDACYYAF…HKTTVDALYH (224 aa)) is N-terminal acylcarrier protein transacylase domain (SAT). A Ketosynthase family 3 (KS3) domain is found at 391–817 (QEPIAICGMS…GSNGALLLEE (427 aa)). Active-site for beta-ketoacyl synthase activity residues include Cys-561, His-696, and His-736. The segment at 914–1239 (VFVFSGQGGQ…NLTLSSSLSQ (326 aa)) is malonyl-CoA:ACP transacylase (MAT) domain. The For acyl/malonyl transferase activity role is filled by Ser-1008. The tract at residues 1306 to 1436 (MLQSWAQFPS…GQFRPLLVAD (131 aa)) is N-terminal hotdog fold. The region spanning 1306 to 1613 (MLQSWAQFPS…FKKLRLNTLQ (308 aa)) is the PKS/mFAS DH domain. The product template (PT) domain stretch occupies residues 1335 to 1610 (ITGHIVGDVP…GMCFKKLRLN (276 aa)). The active-site Proton acceptor; for dehydratase activity is His-1338. Residues 1463–1613 (AEVITTRTAY…FKKLRLNTLQ (151 aa)) form a C-terminal hotdog fold region. Asp-1524 serves as the catalytic Proton donor; for dehydratase activity. Carrier domains are found at residues 1659–1734 (VDVQ…SSTI) and 1844–1921 (SSSS…SSKQ). O-(pantetheine 4'-phosphoryl)serine occurs at positions 1693 and 1881. Residues 1917–1945 (ISSKQPGKSPKPSEEATMDPDKEEDLSDL) form a disordered region. Residues 1932 to 1943 (ATMDPDKEEDLS) show a composition bias toward acidic residues. The interval 1962–2201 (VPMSVQKSSS…LGAVTQALVD (240 aa)) is thioesterase (TE) domain.

It catalyses the reaction 3 malonyl-CoA + acetyl-CoA + 2 H(+) = orsellinate + 3 CO2 + 4 CoA. Its pathway is secondary metabolite biosynthesis. Its function is as follows. Non-reducing polyketide synthase, part of the gene cluster that mediates the biosynthesis of melleolides, a range of antifungal and phytotoxic polyketide derivatives composed of an orsellinic acid (OA) moiety esterified to various sesquiterpene alcohols. The first step in melleolides biosynthesis is performed by the delta(6)-protoilludene synthase PRO1 which catalyzes the cyclization of farnesyl diphosphate to protoilludene. The orsellinic acid synthase armB produces OA by condensing acetyl-CoA with 3 malonyl-CoA units in a three-round chain elongation reaction folowed by a C2-C7 ring closure. ArmB further catalyzes the trans-esterification of OA to the various sesquiterpene alcohols resulting from the hydroxylation of protoilludene. The melleolides cluster also includes 5 cytochrome P450 monooxygenases, 4 NAD(+)-dependent oxidoreductases, one flavin-dependent oxidoreductase, and one O-methyltransferase. The cytochrome P450 monooxygenases may be involved in protoilludene hydroxylation to elaborate melleolides with multiple alcohol groups, such as melleolide D, which carries alcohol functionalities at C-4, C-5, C-10, and C-13. The role of the NAD(+)-dependent enzymes remains unknown. Numerous melleolides, including arnamial, show 5'-O-methylation of the aromatic moiety which may be catalyzed by the methyltransferase encoded in the cluster. The flavin-dependent oxidoreductase might represent the dehydrogenase yielding the aldehyde in position 1 of arnamial and other melleolides. Finally, several halogenase localized outside of the cluster (armH1 to armH5), are able to catalyze the transfer of a single chlorine atom to the melleolide backbone, resulting in a 6'-chloromelleolide product. The polypeptide is Orsellinic acid synthase armB (Armillaria mellea (Honey mushroom)).